The chain runs to 507 residues: MKNFSKFALTSIAALTVASPLVNTEVDAKDKVSATQNIDAKVTQESQATDALKELPKSENIKKHYKDYKVTDTEKDNKGFTHYTLQPKVGNTYAPDKEVKVHTNKEGKVVLVNGDTDAKKVQPTNKVSISKESATDKAFEAIKIDRQKAKNLKSDVIKTNKVEIDGEKNKYVYNIEIITTSPKISHWNVKIDAETGQVVDKLNMIKEAATTGTGKGVLGDTKQININSVSGGYALQDLTQQGTLSAYNYDANTGQAYLMQDKDRNFDDDEQRAGVDANYYAKETYDYYKNTFGRESYDNQGSPIISLAHVNNFQGQDNRNNAAWIGDKMIYGDGDGRTFTALSGANDVVAHEITHGVTQQTANLVYRSQSGALNESFSDVFGYFVDDEDFLMGEDVYTPGVGGDALRSMSNPERFGQPSHMNDFVYTNSDNGGVHTNSGIPNKAAYNTIRSIGKQRSEQIYYRALTVYLTSNSDFQDAKASLQQAALDLYGEGIAQQVGQAWDSVGV.

The first 28 residues, 1–28 (MKNFSKFALTSIAALTVASPLVNTEVDA), serve as a signal peptide directing secretion. Positions 29–207 (KDKVSATQNI…VVDKLNMIKE (179 aa)) are excised as a propeptide. D347 lines the Ca(2+) pocket. H351 is a Zn(2+) binding site. Residue E352 is part of the active site. Zn(2+) contacts are provided by H355 and E375. Ca(2+)-binding residues include D386, E388, D389, L391, E394, Y397, T398, V401, and D404. The active-site Proton donor is the H435.

Belongs to the peptidase M4 family. The cofactor is Ca(2+). Zn(2+) serves as cofactor.

It is found in the secreted. Protease that has a low substrate specificity. Glucagon is preferentially cleaved between aromatic (Phe) and hydrophobic (Val) amino acids. Hydrolyzes casein and elastin. This is Extracellular elastase (sepA) from Staphylococcus epidermidis.